The primary structure comprises 377 residues: Nitric oxide reductase FlRd-NAD(+) reductase (377 aa).

The protein belongs to the FAD-dependent oxidoreductase family. FAD is required as a cofactor.

It is found in the cytoplasm. It catalyses the reaction 2 reduced [nitric oxide reductase rubredoxin domain] + NAD(+) + H(+) = 2 oxidized [nitric oxide reductase rubredoxin domain] + NADH. Its pathway is nitrogen metabolism; nitric oxide reduction. Functionally, one of at least two accessory proteins for anaerobic nitric oxide (NO) reductase. Reduces the rubredoxin moiety of NO reductase. The polypeptide is Nitric oxide reductase FlRd-NAD(+) reductase (Salmonella typhi).